Consider the following 270-residue polypeptide: tRNA (guanine-N(1)-)-methyltransferase (270 aa).

Residues G113 and 133-138 contribute to the S-adenosyl-L-methionine site; that span reads IGDYVL. The tract at residues 251 to 270 is disordered; the sequence is APTEGTGLIHHRDVEGPGEG. Basic and acidic residues predominate over residues 260–270; that stretch reads HHRDVEGPGEG.

The protein belongs to the RNA methyltransferase TrmD family. Homodimer.

It is found in the cytoplasm. The catalysed reaction is guanosine(37) in tRNA + S-adenosyl-L-methionine = N(1)-methylguanosine(37) in tRNA + S-adenosyl-L-homocysteine + H(+). Functionally, specifically methylates guanosine-37 in various tRNAs. The chain is tRNA (guanine-N(1)-)-methyltransferase from Frankia casuarinae (strain DSM 45818 / CECT 9043 / HFP020203 / CcI3).